We begin with the raw amino-acid sequence, 217 residues long: Protein LURP-one-related 15 (217 aa).

The residue at position 1 (Met1) is an N-acetylmethionine.

The protein belongs to the LOR family.

Its function is as follows. Might be related to the phospholipid scramblase and tubby-like superfamily of membrane tethered transcription factors. The sequence is that of Protein LURP-one-related 15 from Arabidopsis thaliana (Mouse-ear cress).